A 204-amino-acid polypeptide reads, in one-letter code: Small ribosomal subunit protein uS4 (204 aa).

The interval 1–49 is disordered; sequence MSKRKSAKYKLDRRMGENIWGRPNSPVNKRSYGPGQHGQRRKGKTSDFG. One can recognise an S4 RNA-binding domain in the interval 94–154; it reads QRLDMVVYRA…NKAKEMALVI (61 aa).

This sequence belongs to the universal ribosomal protein uS4 family. Part of the 30S ribosomal subunit. Contacts protein S5. The interaction surface between S4 and S5 is involved in control of translational fidelity.

Functionally, one of the primary rRNA binding proteins, it binds directly to 16S rRNA where it nucleates assembly of the body of the 30S subunit. In terms of biological role, with S5 and S12 plays an important role in translational accuracy. This is Small ribosomal subunit protein uS4 from Erythrobacter litoralis (strain HTCC2594).